Reading from the N-terminus, the 108-residue chain is Iron-sulfur cluster assembly protein CyaY (108 aa).

The protein belongs to the frataxin family.

Its function is as follows. Involved in iron-sulfur (Fe-S) cluster assembly. May act as a regulator of Fe-S biogenesis. The protein is Iron-sulfur cluster assembly protein CyaY of Burkholderia orbicola (strain MC0-3).